The sequence spans 800 residues: Phenylalanine--tRNA ligase beta subunit (800 aa).

In terms of domain architecture, tRNA-binding spans 39-154; it reads TKEIKNLVVG…TEVKPGTDAL (116 aa). The B5 domain occupies 408-483; sequence CFVTPIDISV…RIYGYDKIPS (76 aa). Positions 461, 467, 470, and 471 each coordinate Mg(2+). Residues 708 to 800 enclose the FDX-ACB domain; that stretch reads PRFPGVSRDI…ALKSEGATIR (93 aa).

It belongs to the phenylalanyl-tRNA synthetase beta subunit family. Type 1 subfamily. In terms of assembly, tetramer of two alpha and two beta subunits. It depends on Mg(2+) as a cofactor.

It is found in the cytoplasm. It catalyses the reaction tRNA(Phe) + L-phenylalanine + ATP = L-phenylalanyl-tRNA(Phe) + AMP + diphosphate + H(+). In Staphylococcus saprophyticus subsp. saprophyticus (strain ATCC 15305 / DSM 20229 / NCIMB 8711 / NCTC 7292 / S-41), this protein is Phenylalanine--tRNA ligase beta subunit.